The following is a 433-amino-acid chain: Trigger factor (433 aa).

The PPIase FKBP-type domain maps to 163-248 (GDTVNIDFSG…VNEIKFKDVP (86 aa)).

The protein belongs to the FKBP-type PPIase family. Tig subfamily.

It localises to the cytoplasm. It carries out the reaction [protein]-peptidylproline (omega=180) = [protein]-peptidylproline (omega=0). Its function is as follows. Involved in protein export. Acts as a chaperone by maintaining the newly synthesized protein in an open conformation. Functions as a peptidyl-prolyl cis-trans isomerase. This Staphylococcus epidermidis (strain ATCC 35984 / DSM 28319 / BCRC 17069 / CCUG 31568 / BM 3577 / RP62A) protein is Trigger factor.